The following is a 194-amino-acid chain: ATP-dependent Clp protease proteolytic subunit (194 aa).

Catalysis depends on S99, which acts as the Nucleophile. Residue H124 is part of the active site.

This sequence belongs to the peptidase S14 family. As to quaternary structure, fourteen ClpP subunits assemble into 2 heptameric rings which stack back to back to give a disk-like structure with a central cavity, resembling the structure of eukaryotic proteasomes.

The protein localises to the cytoplasm. It carries out the reaction Hydrolysis of proteins to small peptides in the presence of ATP and magnesium. alpha-casein is the usual test substrate. In the absence of ATP, only oligopeptides shorter than five residues are hydrolyzed (such as succinyl-Leu-Tyr-|-NHMec, and Leu-Tyr-Leu-|-Tyr-Trp, in which cleavage of the -Tyr-|-Leu- and -Tyr-|-Trp bonds also occurs).. In terms of biological role, cleaves peptides in various proteins in a process that requires ATP hydrolysis. Has a chymotrypsin-like activity. Plays a major role in the degradation of misfolded proteins. The protein is ATP-dependent Clp protease proteolytic subunit of Borrelia garinii subsp. bavariensis (strain ATCC BAA-2496 / DSM 23469 / PBi) (Borreliella bavariensis).